A 523-amino-acid chain; its full sequence is Pituitary adenylate cyclase-activating polypeptide type I receptor (523 aa).

Positions Met1–Ala19 are cleaved as a signal peptide. Residues Met20–Ser151 are Extracellular-facing. Cystine bridges form between Cys33–Cys62, Cys53–Cys117, and Cys76–Cys133. Residues Asn47, Asn59, and Asn116 are each glycosylated (N-linked (GlcNAc...) asparagine). The segment at Glu124–Tyr138 is important for ADCYAP1/PACAP ligand binding and specificity. The segment at Glu124 to Tyr138 is important for ligand binding and specificity. The chain crosses the membrane as a helical span at residues Val152 to Arg176. The Cytoplasmic segment spans residues Phe177–Phe186. A helical transmembrane segment spans residues Ile187–Trp207. Over Ile208–Thr222 the chain is Extracellular. Residues Val223–Leu248 form a helical membrane-spanning segment. Cys225 and Cys295 are oxidised to a cystine. Over Tyr249 to Tyr266 the chain is Cytoplasmic. The helical transmembrane segment at Trp267–Tyr289 threads the bilayer. Residues Phe290–Ser301 are Extracellular-facing. Residues Thr302–Ile328 form a helical membrane-spanning segment. The Cytoplasmic segment spans residues Ile329–Ile346. Residues Tyr347 to Glu429 form a helical membrane-spanning segment. At Asn430–Arg434 the chain is on the extracellular side. The helical transmembrane segment at Glu435–Leu458 threads the bilayer. Residues Asn459–Thr523 are Cytoplasmic-facing. Phosphoserine is present on residues Ser489 and Ser502.

It belongs to the G-protein coupled receptor 2 family. As to quaternary structure, interacts with maxadilan, a vasodilator peptide from Lutzomyia longipalpis saliva; the interaction results in ADCYAP1R1 activation. As to expression, hypothalamus, anterior pituitary, adrenal medulla, testicular germ cells.

The protein resides in the cell membrane. Functionally, g protein-coupled receptor activated by the neuropeptide pituitary adenylate cyclase-activating polypeptide (ADCYAP1/PACAP). Binds both PACAP27 and PACAP38 bioactive peptides. Ligand binding causes a conformation change that triggers signaling via guanine nucleotide-binding proteins (G proteins) and modulates the activity of downstream effectors. Activates cAMP-dependent pathway. May regulate the release of adrenocorticotropin, luteinizing hormone, growth hormone, prolactin, epinephrine, and catecholamine. May play a role in spermatogenesis and sperm motility. Causes smooth muscle relaxation and secretion in the gastrointestinal tract. This Rattus norvegicus (Rat) protein is Pituitary adenylate cyclase-activating polypeptide type I receptor.